Reading from the N-terminus, the 640-residue chain is Biosynthetic arginine decarboxylase (640 aa).

Lysine 105 bears the N6-(pyridoxal phosphate)lysine mark. 290 to 300 (FDVGGGLAVDY) is a binding site for substrate.

Belongs to the Orn/Lys/Arg decarboxylase class-II family. SpeA subfamily. Requires Mg(2+) as cofactor. It depends on pyridoxal 5'-phosphate as a cofactor.

It catalyses the reaction L-arginine + H(+) = agmatine + CO2. Catalyzes the biosynthesis of agmatine from arginine. This chain is Biosynthetic arginine decarboxylase, found in Vibrio cholerae serotype O1 (strain ATCC 39315 / El Tor Inaba N16961).